A 143-amino-acid polypeptide reads, in one-letter code: Small ribosomal subunit protein bS18m (143 aa).

It belongs to the bacterial ribosomal protein bS18 family. In terms of assembly, component of the mitochondrial ribosome small subunit (28S) which comprises a 12S rRNA and about 30 distinct proteins.

The protein localises to the mitochondrion. This is Small ribosomal subunit protein bS18m (MRPS18C) from Bos taurus (Bovine).